A 326-amino-acid chain; its full sequence is N-acetyl-gamma-glutamyl-phosphate reductase (326 aa).

The active site involves Cys-155.

Belongs to the NAGSA dehydrogenase family. Type 1 subfamily.

Its subcellular location is the cytoplasm. The catalysed reaction is N-acetyl-L-glutamate 5-semialdehyde + phosphate + NADP(+) = N-acetyl-L-glutamyl 5-phosphate + NADPH + H(+). It participates in amino-acid biosynthesis; L-arginine biosynthesis; N(2)-acetyl-L-ornithine from L-glutamate: step 3/4. In terms of biological role, catalyzes the NADPH-dependent reduction of N-acetyl-5-glutamyl phosphate to yield N-acetyl-L-glutamate 5-semialdehyde. In Shewanella denitrificans (strain OS217 / ATCC BAA-1090 / DSM 15013), this protein is N-acetyl-gamma-glutamyl-phosphate reductase.